The chain runs to 101 residues: Urease subunit beta (101 aa).

Belongs to the urease beta subunit family. In terms of assembly, heterotrimer of UreA (gamma), UreB (beta) and UreC (alpha) subunits. Three heterotrimers associate to form the active enzyme.

Its subcellular location is the cytoplasm. It carries out the reaction urea + 2 H2O + H(+) = hydrogencarbonate + 2 NH4(+). It functions in the pathway nitrogen metabolism; urea degradation; CO(2) and NH(3) from urea (urease route): step 1/1. The chain is Urease subunit beta from Paraburkholderia phymatum (strain DSM 17167 / CIP 108236 / LMG 21445 / STM815) (Burkholderia phymatum).